The sequence spans 315 residues: Ninja-family protein 1 (315 aa).

3 disordered regions span residues 1–28, 68–142, and 156–237; these read MASR…AGEA, SLPG…AQEP, and DQGN…TGDL. Over residues 99–108 the composition is skewed to basic and acidic residues; that stretch reads ERWRRREMQS. Polar residues predominate over residues 156 to 166; the sequence is DQGNPSSSMPE. Low complexity-rich tracts occupy residues 184-197 and 221-234; these read SSDN…QNKS and LRTL…TTST.

The protein belongs to the Ninja family.

It localises to the nucleus. The protein is Ninja-family protein 1 (AFP-A1) of Triticum aestivum (Wheat).